The following is a 1106-amino-acid chain: Carbamoyl phosphate synthase large chain (1106 aa).

Residues 1-402 (MPRREDIRSV…SFQKALRSLE (402 aa)) are carboxyphosphate synthetic domain. Positions 129, 169, 175, 176, 208, 210, 215, 241, 242, 243, 285, and 299 each coordinate ATP. The ATP-grasp 1 domain maps to 133–328 (KKAMEKIGVR…IAKIAALLSI (196 aa)). Mg(2+) contacts are provided by glutamine 285, glutamate 299, and asparagine 301. Residues glutamine 285, glutamate 299, and asparagine 301 each contribute to the Mn(2+) site. The interval 403–582 (IDRYGFGSDG…YSSYDEEDES (180 aa)) is oligomerization domain. The segment at 583–964 (DVTNAKSVMI…AFLKSQYMAG (382 aa)) is carbamoyl phosphate synthetic domain. The region spanning 707–898 (VEVLEKLKLN…IVKYATRIMM (192 aa)) is the ATP-grasp 2 domain. Arginine 743, serine 782, leucine 784, glutamate 789, glycine 814, isoleucine 815, histidine 816, serine 817, glutamine 857, and glutamate 869 together coordinate ATP. The Mg(2+) site is built by glutamine 857, glutamate 869, and asparagine 871. The Mn(2+) site is built by glutamine 857, glutamate 869, and asparagine 871. The MGS-like domain occupies 965 to 1106 (DELPSQGTVF…QEIHAMPKIL (142 aa)). An allosteric domain region spans residues 965-1106 (DELPSQGTVF…QEIHAMPKIL (142 aa)).

Belongs to the CarB family. In terms of assembly, composed of two chains; the small (or glutamine) chain promotes the hydrolysis of glutamine to ammonia, which is used by the large (or ammonia) chain to synthesize carbamoyl phosphate. Tetramer of heterodimers (alpha,beta)4. Requires Mg(2+) as cofactor. It depends on Mn(2+) as a cofactor.

The catalysed reaction is hydrogencarbonate + L-glutamine + 2 ATP + H2O = carbamoyl phosphate + L-glutamate + 2 ADP + phosphate + 2 H(+). It carries out the reaction hydrogencarbonate + NH4(+) + 2 ATP = carbamoyl phosphate + 2 ADP + phosphate + 2 H(+). Its pathway is amino-acid biosynthesis; L-arginine biosynthesis; carbamoyl phosphate from bicarbonate: step 1/1. It functions in the pathway pyrimidine metabolism; UMP biosynthesis via de novo pathway; (S)-dihydroorotate from bicarbonate: step 1/3. In terms of biological role, large subunit of the glutamine-dependent carbamoyl phosphate synthetase (CPSase). CPSase catalyzes the formation of carbamoyl phosphate from the ammonia moiety of glutamine, carbonate, and phosphate donated by ATP, constituting the first step of 2 biosynthetic pathways, one leading to arginine and/or urea and the other to pyrimidine nucleotides. The large subunit (synthetase) binds the substrates ammonia (free or transferred from glutamine from the small subunit), hydrogencarbonate and ATP and carries out an ATP-coupled ligase reaction, activating hydrogencarbonate by forming carboxy phosphate which reacts with ammonia to form carbamoyl phosphate. This chain is Carbamoyl phosphate synthase large chain, found in Leptospira interrogans serogroup Icterohaemorrhagiae serovar copenhageni (strain Fiocruz L1-130).